The following is a 393-amino-acid chain: Proteasome-activating nucleotidase (393 aa).

A coiled-coil region spans residues 15–53 (DEVQLVRLLEEKIKSLQIEIENLRKELNYYKAEMEKMLS). Residues 178 to 183 (GTGKTM) and tyrosine 317 each bind ATP. The stretch at 365–393 (MNDLVEAINKINVKRNKMESMKERREKYS) forms a coiled coil. Positions 391 to 393 (KYS) are docks into pockets in the proteasome alpha-ring to cause gate opening.

The protein belongs to the AAA ATPase family. As to quaternary structure, homohexamer. The hexameric complex has a two-ring architecture resembling a top hat that caps the 20S proteasome core at one or both ends. Upon ATP-binding, the C-terminus of PAN interacts with the alpha-rings of the proteasome core by binding to the intersubunit pockets.

Its subcellular location is the cytoplasm. Functionally, ATPase which is responsible for recognizing, binding, unfolding and translocation of substrate proteins into the archaeal 20S proteasome core particle. Is essential for opening the gate of the 20S proteasome via an interaction with its C-terminus, thereby allowing substrate entry and access to the site of proteolysis. Thus, the C-termini of the proteasomal ATPase function like a 'key in a lock' to induce gate opening and therefore regulate proteolysis. Unfolding activity requires energy from ATP hydrolysis, whereas ATP binding alone promotes ATPase-20S proteasome association which triggers gate opening, and supports translocation of unfolded substrates. The sequence is that of Proteasome-activating nucleotidase from Saccharolobus solfataricus (strain ATCC 35092 / DSM 1617 / JCM 11322 / P2) (Sulfolobus solfataricus).